The following is a 164-amino-acid chain: Peptidyl-prolyl cis-trans isomerase A (164 aa).

Met1 carries the N-acetylmethionine modification. Val2 is subject to N-acetylvaline; in Peptidyl-prolyl cis-trans isomerase A, N-terminally processed. A PPIase cyclophilin-type domain is found at 7-163 (FFDIAVDGEP…KKITIADCGQ (157 aa)). Lys28 bears the N6-acetyllysine; alternate mark. Lys28 participates in a covalent cross-link: Glycyl lysine isopeptide (Lys-Gly) (interchain with G-Cter in SUMO2); alternate. Residue Lys28 forms a Glycyl lysine isopeptide (Lys-Gly) (interchain with G-Cter in ubiquitin); alternate linkage. N6-acetyllysine is present on residues Lys44 and Lys76. Phosphoserine is present on Ser77. Residue Lys82 is modified to N6-acetyllysine; alternate. Lys82 is covalently cross-linked (Glycyl lysine isopeptide (Lys-Gly) (interchain with G-Cter in SUMO2); alternate). Thr93 is subject to Phosphothreonine. N-linked (GlcNAc...) asparagine glycosylation is present at Asn108. An N6-acetyllysine mark is found at Lys125, Lys131, and Lys133.

It belongs to the cyclophilin-type PPIase family. PPIase A subfamily. Interacts with protein phosphatase PPP3CA/calcineurin A. Interacts with isoform 2 of BSG/CD147. Interacts with FOXO1; the interaction promotes FOXO1 dephosphorylation, nuclear accumulation and transcriptional activity. Interacts with integrin ITGA2B:ITGB3; the interaction is ROS and peptidyl-prolyl cis-trans isomerase (PPIase) activity-dependent and is increased in the presence of thrombin. Interacts with MAP3K5. Interacts with TARDBP; the interaction is dependent on the RNA-binding activity of TARDBP and the PPIase activity of PPIA/CYPA and the acetylation of PPIA/CYPA at Lys-125 favors the interaction. Interacts with HNRNPA1, HNRNPA2B1, HNRNPC, RBMX, HNRNPK and HNRNPM. Acetylation at Lys-125 markedly inhibits catalysis of cis to trans isomerization. PPIA acetylation also antagonizes the immunosuppressive effects of cyclosporine by inhibiting the sequential steps of cyclosporine binding and calcineurin inhibition. Acetylation at Lys-125 favors the interaction with TARDBP.

The protein localises to the cytoplasm. Its subcellular location is the secreted. It is found in the nucleus. It catalyses the reaction [protein]-peptidylproline (omega=180) = [protein]-peptidylproline (omega=0). With respect to regulation, binds cyclosporin A (CsA). CsA mediates some of its effects via an inhibitory action on PPIase. Its function is as follows. Catalyzes the cis-trans isomerization of proline imidic peptide bonds in oligopeptides. Exerts a strong chemotactic effect on leukocytes partly through activation of one of its membrane receptors BSG/CD147, initiating a signaling cascade that culminates in MAPK/ERK activation. Activates endothelial cells (ECs) in a proinflammatory manner by stimulating activation of NF-kappa-B and ERK, JNK and p38 MAP-kinases and by inducing expression of adhesion molecules including SELE and VCAM1. Induces apoptosis in ECs by promoting the FOXO1-dependent expression of CCL2 and BCL2L11 which are involved in EC chemotaxis and apoptosis. In response to oxidative stress, initiates proapoptotic and antiapoptotic signaling in ECs via activation of NF-kappa-B and AKT1 and up-regulation of antiapoptotic protein BCL2. Negatively regulates MAP3K5/ASK1 kinase activity, autophosphorylation and oxidative stress-induced apoptosis mediated by MAP3K5/ASK1. Necessary for the assembly of TARDBP in heterogeneous nuclear ribonucleoprotein (hnRNP) complexes and regulates TARDBP binding to RNA UG repeats and TARDBP-dependent expression of HDAC6, ATG7 and VCP which are involved in clearance of protein aggregates. Plays an important role in platelet activation and aggregation. Regulates calcium mobilization and integrin ITGA2B:ITGB3 bidirectional signaling via increased ROS production as well as by facilitating the interaction between integrin and the cell cytoskeleton. Binds heparan sulfate glycosaminoglycans. This Saguinus oedipus (Cotton-top tamarin) protein is Peptidyl-prolyl cis-trans isomerase A (PPIA).